Consider the following 93-residue polypeptide: N-acetyl-S-hydroxy-L-cysteine reductase (93 aa).

Residues 1–93 (MSDVVNIVVW…NHAQIKEAKR (93 aa)) enclose the Glutaredoxin domain. Cys-15 and Cys-18 are joined by a disulfide.

Belongs to the glutaredoxin family.

The catalysed reaction is N-acetyl-S-hydroxy-L-cysteine + AH2 = N-acetyl-L-cysteine + A + H2O. The protein operates within amino-acid metabolism. Involved in a cysteine salvage pathway from S-alkylcysteine. Catalyzes the reduction of N-acetyl-S-hydroxy-L-cysteine (N-acetyl-L-cysteine sulfenic acid) to N-acetyl-L-cysteine. This pathway is likely important in the catabolism of alkylated cysteine generated by proteolysis of alkylated glutathione formed in the detoxification of a wide range of electrophiles. The chain is N-acetyl-S-hydroxy-L-cysteine reductase from Bacillus subtilis (strain 168).